Here is a 174-residue protein sequence, read N- to C-terminus: 3-hydroxydecanoyl-[acyl-carrier-protein] dehydratase (174 aa).

The active site involves histidine 71.

Belongs to the thioester dehydratase family. FabA subfamily. Homodimer.

It localises to the cytoplasm. It catalyses the reaction a (3R)-hydroxyacyl-[ACP] = a (2E)-enoyl-[ACP] + H2O. The catalysed reaction is (3R)-hydroxydecanoyl-[ACP] = (2E)-decenoyl-[ACP] + H2O. It carries out the reaction (2E)-decenoyl-[ACP] = (3Z)-decenoyl-[ACP]. It functions in the pathway lipid metabolism; fatty acid biosynthesis. Functionally, necessary for the introduction of cis unsaturation into fatty acids. Catalyzes the dehydration of (3R)-3-hydroxydecanoyl-ACP to E-(2)-decenoyl-ACP and then its isomerization to Z-(3)-decenoyl-ACP. Can catalyze the dehydratase reaction for beta-hydroxyacyl-ACPs with saturated chain lengths up to 16:0, being most active on intermediate chain length. The sequence is that of 3-hydroxydecanoyl-[acyl-carrier-protein] dehydratase from Nitrobacter winogradskyi (strain ATCC 25391 / DSM 10237 / CIP 104748 / NCIMB 11846 / Nb-255).